Consider the following 715-residue polypeptide: Polyribonucleotide nucleotidyltransferase (715 aa).

Residues Asp493 and Asp499 each coordinate Mg(2+). Residues 560 to 619 enclose the KH domain; sequence PRMITVKINPEKIRDVIGKGGSVIRALTEETGTTIDISDDGVVTIASTSSEGMAEAKKRI. The S1 motif domain maps to 629-697; sequence GQVYEGTVLK…EKGRVRLSAK (69 aa).

It belongs to the polyribonucleotide nucleotidyltransferase family. It depends on Mg(2+) as a cofactor.

It localises to the cytoplasm. It carries out the reaction RNA(n+1) + phosphate = RNA(n) + a ribonucleoside 5'-diphosphate. Involved in mRNA degradation. Catalyzes the phosphorolysis of single-stranded polyribonucleotides processively in the 3'- to 5'-direction. This is Polyribonucleotide nucleotidyltransferase from Burkholderia cenocepacia (strain HI2424).